We begin with the raw amino-acid sequence, 371 residues long: UDP-N-acetylglucosamine--N-acetylmuramyl-(pentapeptide) pyrophosphoryl-undecaprenol N-acetylglucosamine transferase (371 aa).

Residues 10 to 12, N124, R165, S197, I251, and Q296 contribute to the UDP-N-acetyl-alpha-D-glucosamine site; that span reads TGG.

Belongs to the glycosyltransferase 28 family. MurG subfamily.

The protein resides in the cell membrane. The catalysed reaction is di-trans,octa-cis-undecaprenyl diphospho-N-acetyl-alpha-D-muramoyl-L-alanyl-D-glutamyl-meso-2,6-diaminopimeloyl-D-alanyl-D-alanine + UDP-N-acetyl-alpha-D-glucosamine = di-trans,octa-cis-undecaprenyl diphospho-[N-acetyl-alpha-D-glucosaminyl-(1-&gt;4)]-N-acetyl-alpha-D-muramoyl-L-alanyl-D-glutamyl-meso-2,6-diaminopimeloyl-D-alanyl-D-alanine + UDP + H(+). The protein operates within cell wall biogenesis; peptidoglycan biosynthesis. Its function is as follows. Cell wall formation. Catalyzes the transfer of a GlcNAc subunit on undecaprenyl-pyrophosphoryl-MurNAc-pentapeptide (lipid intermediate I) to form undecaprenyl-pyrophosphoryl-MurNAc-(pentapeptide)GlcNAc (lipid intermediate II). This chain is UDP-N-acetylglucosamine--N-acetylmuramyl-(pentapeptide) pyrophosphoryl-undecaprenol N-acetylglucosamine transferase, found in Carboxydothermus hydrogenoformans (strain ATCC BAA-161 / DSM 6008 / Z-2901).